The sequence spans 283 residues: Methyltransferase cpsF (283 aa).

This sequence belongs to the methyltransferase superfamily. LaeA methyltransferase family.

The catalysed reaction is campesine A + S-adenosyl-L-methionine = campesine B + S-adenosyl-L-homocysteine + H(+). The protein operates within alkaloid biosynthesis. Its function is as follows. Methyltransferase; part of the gene cluster that mediates the biosynthesis of campesine G, a dimeric indole piperazine alkaloid that shows good insecticidal activity Galleria mellonella. Within the pathway, cpsF methylates campesine A at N13 of piperazine ring to produce campesine B. The non-canonical non-ribosomal peptide synthetase cpsA catalyzes the first steps of the pathway by producing L-tryptophanal and L-valinal from their respective amino-acids. These products condensate spontaneously to form trypyl-valyl pyrazine also known as didehydrocampesine A. The NmrA-like family domain-containing oxidoreductase cpsB is the next enzyme in cps pathway and reduces the unstable didehydrocampesine A to campesine A. The methyltransferase cpsF and the acetyltransferase cpsE both recognize N13 of piperazine ring to carry out methylation and acetylation of campesine A to produce campesine C and B, respectively. The cytochrome P450 monooxygenase cpsD then acts as a dimerase that catalyzes oxidative heterocoupling between campesine B and C to produce heterodimers with unexpected 6/5/6/6/6/6/5/6 eight-ring scaffold called campesine D. Finally,the cytochrome P450 monooxygenase cpsC is a regioselective dehydrogenase that catalyzes dehydrogenation reaction towards C2-N1 to produce campesine G. The sequence is that of Methyltransferase cpsF from Aspergillus campestris (strain IBT 28561).